We begin with the raw amino-acid sequence, 310 residues long: 17-beta-hydroxysteroid dehydrogenase type 3 (310 aa).

Residue 48 to 77 coordinates NADP(+); sequence GQWAVITGAGDGIGKAYSFELAKRGLNVVL. Ser185 provides a ligand contact to substrate. Tyr198 serves as the catalytic Proton acceptor.

The protein belongs to the short-chain dehydrogenases/reductases (SDR) family. 17-beta-HSD 3 subfamily. In terms of tissue distribution, testis.

Its subcellular location is the endoplasmic reticulum. It carries out the reaction a 17beta-hydroxy steroid + NADP(+) = a 17-oxo steroid + NADPH + H(+). It catalyses the reaction testosterone + NADP(+) = androst-4-ene-3,17-dione + NADPH + H(+). The enzyme catalyses 17beta-estradiol + NADP(+) = estrone + NADPH + H(+). The catalysed reaction is 3beta-hydroxyandrost-5-en-17-one + NADPH + H(+) = androst-5-en-3beta,17beta-diol + NADP(+). It carries out the reaction 17beta-hydroxy-5alpha-androstan-3-one + NADP(+) = 5alpha-androstan-3,17-dione + NADPH + H(+). It catalyses the reaction androsterone + NADPH + H(+) = 5alpha-androstane-3alpha,17beta-diol + NADP(+). The enzyme catalyses 3beta-hydroxy-5alpha-androstan-17-one + NADPH + H(+) = 5alpha-androstane-3beta,17beta-diol + NADP(+). The catalysed reaction is androst-4-ene-3,11,17-trione + NADPH + H(+) = 17beta-hydroxyandrost-4-ene-3,11-dione + NADP(+). It carries out the reaction 11beta-hydroxyandrost-4-ene-3,17-dione + NADPH + H(+) = 11beta,17beta-dihydroxyandrost-4-ene-3-one + NADP(+). It participates in hormone biosynthesis; testosterone biosynthesis. It functions in the pathway steroid metabolism. In terms of biological role, catalyzes the conversion of 17-oxosteroids to 17beta-hydroxysteroids. Favors the reduction of androstenedione to testosterone. Testosterone is the key androgen driving male development and function. Uses NADPH while the two other EDH17B enzymes use NADH. Androgens such as epiandrosterone, dehydroepiandrosterone, androsterone and androstanedione are accepted as substrates and reduced at C-17. Can reduce 11-ketoandrostenedione as well as 11beta-hydroxyandrostenedione at C-17 to the respective testosterone forms. The protein is 17-beta-hydroxysteroid dehydrogenase type 3 of Homo sapiens (Human).